The chain runs to 227 residues: Cytochrome c oxidase subunit 2 (227 aa).

Over 1–14 (MAYPMQLGFQDATS) the chain is Mitochondrial intermembrane. The helical transmembrane segment at 15 to 45 (PIMEELLHFHDHTLMIVFLISSLVLYVISLM) threads the bilayer. The Mitochondrial matrix portion of the chain corresponds to 46 to 59 (LTTKLTHTSTMDAQ). Residues 60–87 (EVETIWTILPAIILILIALPSLRILYMM) traverse the membrane as a helical segment. Topologically, residues 88-227 (DEINNPSLTV…YFEKWSASML (140 aa)) are mitochondrial intermembrane. Histidine 161, cysteine 196, glutamate 198, cysteine 200, histidine 204, and methionine 207 together coordinate Cu cation. Glutamate 198 contributes to the Mg(2+) binding site. Tyrosine 218 carries the phosphotyrosine modification.

It belongs to the cytochrome c oxidase subunit 2 family. As to quaternary structure, component of the cytochrome c oxidase (complex IV, CIV), a multisubunit enzyme composed of 14 subunits. The complex is composed of a catalytic core of 3 subunits MT-CO1, MT-CO2 and MT-CO3, encoded in the mitochondrial DNA, and 11 supernumerary subunits COX4I, COX5A, COX5B, COX6A, COX6B, COX6C, COX7A, COX7B, COX7C, COX8 and NDUFA4, which are encoded in the nuclear genome. The complex exists as a monomer or a dimer and forms supercomplexes (SCs) in the inner mitochondrial membrane with NADH-ubiquinone oxidoreductase (complex I, CI) and ubiquinol-cytochrome c oxidoreductase (cytochrome b-c1 complex, complex III, CIII), resulting in different assemblies (supercomplex SCI(1)III(2)IV(1) and megacomplex MCI(2)III(2)IV(2)). Found in a complex with TMEM177, COA6, COX18, COX20, SCO1 and SCO2. Interacts with TMEM177 in a COX20-dependent manner. Interacts with COX20. Interacts with COX16. Cu cation serves as cofactor.

The protein resides in the mitochondrion inner membrane. It carries out the reaction 4 Fe(II)-[cytochrome c] + O2 + 8 H(+)(in) = 4 Fe(III)-[cytochrome c] + 2 H2O + 4 H(+)(out). In terms of biological role, component of the cytochrome c oxidase, the last enzyme in the mitochondrial electron transport chain which drives oxidative phosphorylation. The respiratory chain contains 3 multisubunit complexes succinate dehydrogenase (complex II, CII), ubiquinol-cytochrome c oxidoreductase (cytochrome b-c1 complex, complex III, CIII) and cytochrome c oxidase (complex IV, CIV), that cooperate to transfer electrons derived from NADH and succinate to molecular oxygen, creating an electrochemical gradient over the inner membrane that drives transmembrane transport and the ATP synthase. Cytochrome c oxidase is the component of the respiratory chain that catalyzes the reduction of oxygen to water. Electrons originating from reduced cytochrome c in the intermembrane space (IMS) are transferred via the dinuclear copper A center (CU(A)) of subunit 2 and heme A of subunit 1 to the active site in subunit 1, a binuclear center (BNC) formed by heme A3 and copper B (CU(B)). The BNC reduces molecular oxygen to 2 water molecules using 4 electrons from cytochrome c in the IMS and 4 protons from the mitochondrial matrix. This is Cytochrome c oxidase subunit 2 (MT-CO2) from Rusa unicolor (Sambar).